Consider the following 684-residue polypeptide: TBC1 domain family member 23 (684 aa).

A Rab-GAP TBC domain is found at 44–225 (PLPAELRAKV…AIWDGYLQQA (182 aa)). Ser300 is subject to Phosphoserine. The Rhodanese domain occupies 334–446 (EGVRFFVVDC…LQQHLADINV (113 aa)). 3 positions are modified to phosphoserine: Ser469, Ser474, and Ser507. At Thr514 the chain carries Phosphothreonine. A may mediate the interaction with C17orf75, FAM91A1 and WDR11 region spans residues 514-558 (TPVDRHVSSSDRVGKPYRGVKPVFSIGDEEEYDTDEIDSSSMSDD). Residues 514 to 684 (TPVDRHVSSS…IMKVLDALES (171 aa)) are may mediate the interaction with WASHC1. Position 556 is a phosphoserine (Ser556). The tract at residues 559 to 684 (DRKEVVNIQT…IMKVLDALES (126 aa)) is may mediate the interaction with FKBP15 and WASHC2; required for endosome to Golgi trafficking.

Directly interacts with GOLGA1 and GOLGA4. Interacts with FAM91A1, C17ORF75 and WDR11; the interaction recruits TBC1D23 to AP-1-derived vesicles. Directly interacts with WASHC1 and WASHC2/FAM21. Interacts with FKBP15.

The protein localises to the golgi apparatus. Its subcellular location is the trans-Golgi network. It is found in the cytoplasmic vesicle. Its function is as follows. Putative Rab GTPase-activating protein which plays a role in vesicular trafficking. Involved in endosome-to-Golgi trafficking. Acts as a bridging protein by binding simultaneously to golgins, including GOLGA1 and GOLGA4, located at the trans-Golgi, and to the WASH complex, located on endosome-derived vesicles. Together with WDR11 complex facilitates the golgin-mediated capture of vesicles generated using AP-1. Plays a role in brain development, including in cortical neuron positioning. May also be important for neurite outgrowth, possibly through its involvement in membrane trafficking and cargo delivery, 2 processes which are essential for axonal and dendritic growth. May act as a general inhibitor of innate immunity signaling, strongly inhibiting multiple TLR and dectin/CLEC7A-signaling pathways. Does not alter initial activation events, but instead affects maintenance of inflammatory gene expression several hours after bacterial lipopolysaccharide (LPS) challenge. This is TBC1 domain family member 23 (Tbc1d23) from Mus musculus (Mouse).